We begin with the raw amino-acid sequence, 156 residues long: MNHETFLKRAVTLACEGVNAGIGGPFGAVIVKDGAIIAEGQNNVTTSNDPTAHAEVTAIRKACKVLGAYQLDDCILYTSCEPCPMCLGAIYWARPKAVFYAAEHTDAAEAGFDDSFIYKEIDKPAEERTIPFYQVTLTEHLSPFQAWRNFANKKEY.

The region spanning 1–132 is the CMP/dCMP-type deaminase domain; that stretch reads MNHETFLKRA…KPAEERTIPF (132 aa). Position 53 (histidine 53) interacts with Zn(2+). The active-site Proton donor is glutamate 55. 2 residues coordinate Zn(2+): cysteine 83 and cysteine 86.

It belongs to the cytidine and deoxycytidylate deaminase family. Zn(2+) is required as a cofactor.

The catalysed reaction is guanine + H2O + H(+) = xanthine + NH4(+). Its pathway is purine metabolism; guanine degradation; xanthine from guanine: step 1/1. Catalyzes the hydrolytic deamination of guanine, producing xanthine and ammonia. The chain is Guanine deaminase (guaD) from Bacillus subtilis (strain 168).